The chain runs to 176 residues: Translation initiation factor IF-3 (176 aa).

The protein belongs to the IF-3 family. In terms of assembly, monomer.

It localises to the cytoplasm. In terms of biological role, IF-3 binds to the 30S ribosomal subunit and shifts the equilibrium between 70S ribosomes and their 50S and 30S subunits in favor of the free subunits, thus enhancing the availability of 30S subunits on which protein synthesis initiation begins. The polypeptide is Translation initiation factor IF-3 (Streptococcus mutans serotype c (strain ATCC 700610 / UA159)).